A 288-amino-acid polypeptide reads, in one-letter code: Alpha/beta hydrolase domain-containing protein 17B (288 aa).

Catalysis depends on charge relay system residues S170, D235, and H264. At S282 the chain carries Phosphoserine.

Belongs to the AB hydrolase superfamily. ABHD17 family. Palmitoylated on cysteine residues located in a cysteine cluster at the N-terminus which promotes membrane localization. Palmitoylation is required for post-synaptic localization and for depalmitoylating activity towards DLG4/PSD95. In terms of tissue distribution, expressed in brain.

Its subcellular location is the cell membrane. The protein resides in the recycling endosome membrane. It is found in the cell projection. The protein localises to the dendritic spine. It localises to the postsynaptic density membrane. The enzyme catalyses S-hexadecanoyl-L-cysteinyl-[protein] + H2O = L-cysteinyl-[protein] + hexadecanoate + H(+). In terms of biological role, hydrolyzes fatty acids from S-acylated cysteine residues in proteins. Has depalmitoylating activity towards DLG4/PSD95. Has depalmitoylating activity towards GAP43. Has depalmitoylating activity towards MAP6. Has depalmitoylating activity towards NRAS. This Mus musculus (Mouse) protein is Alpha/beta hydrolase domain-containing protein 17B.